The sequence spans 945 residues: Translation initiation factor IF-2 (945 aa).

Disordered stretches follow at residues 52–80 (RSHG…DSSG) and 96–357 (MKRD…FQAP). Acidic residues predominate over residues 153 to 175 (PEPEPIVEPEPEPEPEPEPEPQP). 2 stretches are compositionally biased toward basic and acidic residues: residues 215–283 (DEER…KEAA) and 294–310 (AKTE…RTAR). Residues 445–614 (PRAPVVTVMG…LLQAEVLELT (170 aa)) form the tr-type G domain. Residues 454-461 (GHVDHGKT) are G1. GTP is bound at residue 454 to 461 (GHVDHGKT). A G2 region spans residues 479-483 (GITQH). A G3 region spans residues 500 to 503 (DTPG). GTP-binding positions include 500 to 504 (DTPGH) and 554 to 557 (NKID). The segment at 554-557 (NKID) is G4. The interval 590–592 (SAK) is G5.

Belongs to the TRAFAC class translation factor GTPase superfamily. Classic translation factor GTPase family. IF-2 subfamily.

The protein localises to the cytoplasm. Its function is as follows. One of the essential components for the initiation of protein synthesis. Protects formylmethionyl-tRNA from spontaneous hydrolysis and promotes its binding to the 30S ribosomal subunits. Also involved in the hydrolysis of GTP during the formation of the 70S ribosomal complex. This is Translation initiation factor IF-2 from Aromatoleum aromaticum (strain DSM 19018 / LMG 30748 / EbN1) (Azoarcus sp. (strain EbN1)).